A 258-amino-acid chain; its full sequence is Thiazole synthase 1 (258 aa).

The active-site Schiff-base intermediate with DXP is the K97. 1-deoxy-D-xylulose 5-phosphate contacts are provided by residues G158, 184-185 (AG), and 206-207 (NT).

Belongs to the ThiG family. As to quaternary structure, homotetramer. Forms heterodimers with either ThiH or ThiS.

It localises to the cytoplasm. It catalyses the reaction [ThiS sulfur-carrier protein]-C-terminal-Gly-aminoethanethioate + 2-iminoacetate + 1-deoxy-D-xylulose 5-phosphate = [ThiS sulfur-carrier protein]-C-terminal Gly-Gly + 2-[(2R,5Z)-2-carboxy-4-methylthiazol-5(2H)-ylidene]ethyl phosphate + 2 H2O + H(+). It functions in the pathway cofactor biosynthesis; thiamine diphosphate biosynthesis. Catalyzes the rearrangement of 1-deoxy-D-xylulose 5-phosphate (DXP) to produce the thiazole phosphate moiety of thiamine. Sulfur is provided by the thiocarboxylate moiety of the carrier protein ThiS. In vitro, sulfur can be provided by H(2)S. The sequence is that of Thiazole synthase 1 from Syntrophotalea carbinolica (strain DSM 2380 / NBRC 103641 / GraBd1) (Pelobacter carbinolicus).